The following is a 353-amino-acid chain: Photosystem II D2 protein (353 aa).

N-acetylthreonine is present on Thr-2. Thr-2 is subject to Phosphothreonine. A helical membrane pass occupies residues 41–61 (CAYFAVGGWFTGTTFVTSWYT). A chlorophyll a-binding site is contributed by His-118. Residues 125 to 141 (GFMLRQFELARSVQLRP) form a helical membrane-spanning segment. Residues Gln-130 and Asn-143 each coordinate pheophytin a. Residues 153-166 (VFVSVFLIYPLGQS) traverse the membrane as a helical segment. A chlorophyll a-binding site is contributed by His-198. Residues 208-228 (AALLCAIHGATVENTLFEDGD) form a helical membrane-spanning segment. His-215 and Phe-262 together coordinate a plastoquinone. A Fe cation-binding site is contributed by His-215. His-269 provides a ligand contact to Fe cation. Residues 279–295 (GLWMSALGVVGLALNLR) traverse the membrane as a helical segment.

This sequence belongs to the reaction center PufL/M/PsbA/D family. In terms of assembly, PSII is composed of 1 copy each of membrane proteins PsbA, PsbB, PsbC, PsbD, PsbE, PsbF, PsbH, PsbI, PsbJ, PsbK, PsbL, PsbM, PsbT, PsbX, PsbY, PsbZ, Psb30/Ycf12, at least 3 peripheral proteins of the oxygen-evolving complex and a large number of cofactors. It forms dimeric complexes. The D1/D2 heterodimer binds P680, chlorophylls that are the primary electron donor of PSII, and subsequent electron acceptors. It shares a non-heme iron and each subunit binds pheophytin, quinone, additional chlorophylls, carotenoids and lipids. There is also a Cl(-1) ion associated with D1 and D2, which is required for oxygen evolution. The PSII complex binds additional chlorophylls, carotenoids and specific lipids. serves as cofactor.

It is found in the plastid. It localises to the chloroplast thylakoid membrane. The enzyme catalyses 2 a plastoquinone + 4 hnu + 2 H2O = 2 a plastoquinol + O2. In terms of biological role, photosystem II (PSII) is a light-driven water:plastoquinone oxidoreductase that uses light energy to abstract electrons from H(2)O, generating O(2) and a proton gradient subsequently used for ATP formation. It consists of a core antenna complex that captures photons, and an electron transfer chain that converts photonic excitation into a charge separation. The D1/D2 (PsbA/PsbD) reaction center heterodimer binds P680, the primary electron donor of PSII as well as several subsequent electron acceptors. D2 is needed for assembly of a stable PSII complex. This Nicotiana tabacum (Common tobacco) protein is Photosystem II D2 protein.